The primary structure comprises 197 residues: Phosphoheptose isomerase (197 aa).

One can recognise an SIS domain in the interval 36–197 (MVNALLNEGK…IDRQLFGSEE (162 aa)). 51-53 (NGG) serves as a coordination point for substrate. Zn(2+) is bound by residues His-60 and Glu-64. Substrate-binding positions include Glu-64, 93 to 94 (ND), 119 to 121 (STS), Ser-124, and Gln-174. Residues Gln-174 and His-182 each contribute to the Zn(2+) site.

It belongs to the SIS family. GmhA subfamily. Homotetramer. The cofactor is Zn(2+).

It localises to the cytoplasm. It carries out the reaction 2 D-sedoheptulose 7-phosphate = D-glycero-alpha-D-manno-heptose 7-phosphate + D-glycero-beta-D-manno-heptose 7-phosphate. It participates in carbohydrate biosynthesis; D-glycero-D-manno-heptose 7-phosphate biosynthesis; D-glycero-alpha-D-manno-heptose 7-phosphate and D-glycero-beta-D-manno-heptose 7-phosphate from sedoheptulose 7-phosphate: step 1/1. Functionally, catalyzes the isomerization of sedoheptulose 7-phosphate in D-glycero-D-manno-heptose 7-phosphate. In Pseudomonas aeruginosa (strain LESB58), this protein is Phosphoheptose isomerase.